We begin with the raw amino-acid sequence, 79 residues long: uncharacterized protein (79 aa).

This is an uncharacterized protein from Escherichia coli (Bacteriophage T4).